A 633-amino-acid polypeptide reads, in one-letter code: tRNA uridine 5-carboxymethylaminomethyl modification enzyme MnmG (633 aa).

FAD contacts are provided by residues glycine 15–glycine 20, valine 127, and serine 182. Glycine 276–phenylalanine 290 provides a ligand contact to NAD(+). Glutamine 373 is a binding site for FAD.

Belongs to the MnmG family. As to quaternary structure, homodimer. Heterotetramer of two MnmE and two MnmG subunits. The cofactor is FAD.

Its subcellular location is the cytoplasm. NAD-binding protein involved in the addition of a carboxymethylaminomethyl (cmnm) group at the wobble position (U34) of certain tRNAs, forming tRNA-cmnm(5)s(2)U34. This chain is tRNA uridine 5-carboxymethylaminomethyl modification enzyme MnmG, found in Streptococcus thermophilus (strain CNRZ 1066).